Consider the following 130-residue polypeptide: U-scoloptoxin(16)-Er4a (130 aa).

The signal sequence occupies residues 1 to 26 (MNTVSVVQFLAVGCAVFVLYGRGVFA).

It belongs to the scoloptoxin-16 family. Contains 3 disulfide bonds. In terms of tissue distribution, expressed by the venom gland.

The protein resides in the secreted. The sequence is that of U-scoloptoxin(16)-Er4a from Ethmostigmus rubripes (Giant centipede).